We begin with the raw amino-acid sequence, 630 residues long: tRNA uridine 5-carboxymethylaminomethyl modification enzyme MnmG (630 aa).

FAD is bound at residue 13 to 18 (GGGHAG). 273–287 (GPRYCPSIEDKIHRF) contributes to the NAD(+) binding site.

It belongs to the MnmG family. As to quaternary structure, homodimer. Heterotetramer of two MnmE and two MnmG subunits. The cofactor is FAD.

It localises to the cytoplasm. Functionally, NAD-binding protein involved in the addition of a carboxymethylaminomethyl (cmnm) group at the wobble position (U34) of certain tRNAs, forming tRNA-cmnm(5)s(2)U34. The polypeptide is tRNA uridine 5-carboxymethylaminomethyl modification enzyme MnmG (Pseudomonas aeruginosa (strain ATCC 15692 / DSM 22644 / CIP 104116 / JCM 14847 / LMG 12228 / 1C / PRS 101 / PAO1)).